The primary structure comprises 575 residues: Alpha-(1,6)-fucosyltransferase (575 aa).

Over 1 to 9 (MRPWTGSWR) the chain is Cytoplasmic. The chain crosses the membrane as a helical; Signal-anchor for type II membrane protein span at residues 10–30 (WIMLILFAWGTLLFYIGGHLV). Residues 31–575 (RDNDHPDHSS…KYPTYPEAEK (545 aa)) lie on the Lumenal side of the membrane. 3 disulfides stabilise this stretch: C204/C266, C212/C230, and C218/C222. One can recognise a GT23 domain in the interval 206–493 (KAKKLVCNIN…PDASANFHSL (288 aa)). Position 278 is a phosphoserine (S278). Positions 299-305 (PRPPYLP) match the SH3-binding motif. Residues 365 to 366 (RR) form an important for donor substrate binding region. An intrachain disulfide couples C465 to C472. One can recognise an SH3 domain in the interval 502-563 (QNAHNQIAIY…PSYKVREKIE (62 aa)).

The protein belongs to the glycosyltransferase 23 family. In terms of processing, tyrosine phosphorylated by PKDCC/VLK.

It localises to the golgi apparatus. The protein resides in the golgi stack membrane. It catalyses the reaction N(4)-{beta-D-GlcNAc-(1-&gt;2)-alpha-D-Man-(1-&gt;3)-[beta-D-GlcNAc-(1-&gt;2)-alpha-D-Man-(1-&gt;6)]-beta-D-Man-(1-&gt;4)-beta-D-GlcNAc-(1-&gt;4)-beta-D-GlcNAc}-L-asparaginyl-[protein] + GDP-beta-L-fucose = an N(4)-{beta-D-GlcNAc-(1-&gt;2)-alpha-D-Man-(1-&gt;3)-[beta-D-GlcNAc-(1-&gt;2)-alpha-D-Man-(1-&gt;6)]-beta-D-Man-(1-&gt;4)-beta-D-GlcNAc-(1-&gt;4)-[alpha-L-Fuc-(1-&gt;6)]-beta-D-GlcNAc}-L-asparaginyl-[protein] + GDP + H(+). It participates in protein modification; protein glycosylation. Functionally, catalyzes the addition of fucose in alpha 1-6 linkage to the first GlcNAc residue, next to the peptide chains in N-glycans. This Canis lupus familiaris (Dog) protein is Alpha-(1,6)-fucosyltransferase (FUT8).